A 100-amino-acid chain; its full sequence is Large ribosomal subunit protein uL23 (100 aa).

It belongs to the universal ribosomal protein uL23 family. Part of the 50S ribosomal subunit. Contacts protein L29, and trigger factor when it is bound to the ribosome.

Its function is as follows. One of the early assembly proteins it binds 23S rRNA. One of the proteins that surrounds the polypeptide exit tunnel on the outside of the ribosome. Forms the main docking site for trigger factor binding to the ribosome. The sequence is that of Large ribosomal subunit protein uL23 from Pasteurella multocida (strain Pm70).